We begin with the raw amino-acid sequence, 108 residues long: Small ribosomal subunit protein uS10 (108 aa).

It belongs to the universal ribosomal protein uS10 family. In terms of assembly, part of the 30S ribosomal subunit.

In terms of biological role, involved in the binding of tRNA to the ribosomes. The protein is Small ribosomal subunit protein uS10 of Mycoplasma pneumoniae (strain ATCC 29342 / M129 / Subtype 1) (Mycoplasmoides pneumoniae).